Here is a 218-residue protein sequence, read N- to C-terminus: Superoxide dismutase [Mn], mitochondrial (218 aa).

Residues His27, His84, Asp174, and His178 each contribute to the Mn(2+) site.

The protein belongs to the iron/manganese superoxide dismutase family. In terms of assembly, homotetramer. The cofactor is Mn(2+).

It is found in the mitochondrion matrix. It carries out the reaction 2 superoxide + 2 H(+) = H2O2 + O2. Functionally, destroys superoxide anion radicals which are normally produced within the cells and which are toxic to biological systems. The polypeptide is Superoxide dismutase [Mn], mitochondrial (SODA) (Chlamydomonas reinhardtii (Chlamydomonas smithii)).